The primary structure comprises 697 residues: MFNKITKQIQFGRDTVTLETGQIARQATAAVMVRIGDTQVLVTVVGRKEANPGQNFFPLTVNYQEKTYATGRIPGGFLKREGRPSEKETLTCRLIDRPIRPLFPKGFMNEVQVVATVMSSDKNRDPDIAALIGTSAALSISGIPFSGPIGAARVGYKDGMYILNPSYSELAESALDLVVAGTEPAVLMVESEAQELSEDQMLGAVLFGHMEMQPLIQGIKEFAAEVGTETWDWKPAEQNETLKAAIKDKFAAALGEAYTITEKMARYAKVGELRDACVAEFATGEDGAPEADEVKDLFGKIEKSVVREAVVSGKPRIDGRALDAVRAIDCQVGTLAKTHGSALFTRGETQAIVTATLGGMRDAQFIDALEGSHQDHFMLQYNFPPYCVGETGFIGSPKRREIGHGRLARRGVEAVVPSVQDFPYTIRVVSEITESNGSSSMASVCGTSMALMDAGVPLTAPVAGIAMGLVKEEDGRYAVLSDILGDEDHLGDMDFKVAGTARGVTALQMDIKIEGITEEIMEKALNQANAGRLHILGEMNKAIAESRSEVSDNAPTLLTLKINPDKIRDVIGKGGATIRALTEETGCTIDIEDDGSVKIYGETREKADEAVRRVEEITAEAEVGAIYEGKVTRVVDFGAFVAIMPGTEGLLHISQIAEERVEKVTDYVNEGEIIKVKVLDVDQRGRIKLSMKEAKED.

2 residues coordinate Mg(2+): D488 and D494. One can recognise a KH domain in the interval 555 to 614; the sequence is PTLLTLKINPDKIRDVIGKGGATIRALTEETGCTIDIEDDGSVKIYGETREKADEAVRRV. Residues 624–692 enclose the S1 motif domain; the sequence is GAIYEGKVTR…QRGRIKLSMK (69 aa).

The protein belongs to the polyribonucleotide nucleotidyltransferase family. In terms of assembly, component of the RNA degradosome, which is a multiprotein complex involved in RNA processing and mRNA degradation. Mg(2+) is required as a cofactor.

It is found in the cytoplasm. The catalysed reaction is RNA(n+1) + phosphate = RNA(n) + a ribonucleoside 5'-diphosphate. Involved in mRNA degradation. Catalyzes the phosphorolysis of single-stranded polyribonucleotides processively in the 3'- to 5'-direction. This is Polyribonucleotide nucleotidyltransferase from Alcanivorax borkumensis (strain ATCC 700651 / DSM 11573 / NCIMB 13689 / SK2).